Reading from the N-terminus, the 242-residue chain is ATP synthase subunit a (242 aa).

5 helical membrane passes run 21–41, 83–103, 117–137, 175–195, and 198–218; these read LSSI…AIIC, AVTL…FSIV, DATV…FYGI, LYGN…LFFN, and AWGW…SIFV.

Belongs to the ATPase A chain family. In terms of assembly, F-type ATPases have 2 components, CF(1) - the catalytic core - and CF(0) - the membrane proton channel. CF(1) has five subunits: alpha(3), beta(3), gamma(1), delta(1), epsilon(1). CF(0) has three main subunits: a(1), b(2) and c(9-12). The alpha and beta chains form an alternating ring which encloses part of the gamma chain. CF(1) is attached to CF(0) by a central stalk formed by the gamma and epsilon chains, while a peripheral stalk is formed by the delta and b chains.

It is found in the cell membrane. Its function is as follows. Key component of the proton channel; it plays a direct role in the translocation of protons across the membrane. The polypeptide is ATP synthase subunit a (Staphylococcus aureus (strain Newman)).